The sequence spans 510 residues: Olfactomedin-4 (510 aa).

The N-terminal stretch at 1 to 20 (MRPGLSFLLALLFFLGQAAG) is a signal peptide. N-linked (GlcNAc...) asparagine glycosylation is found at N72 and N136. Residues 155–234 (DFELIKVEVK…ECEASKDQNT (80 aa)) are a coiled coil. Positions 245–507 (SCGHGGVVNI…LLNYDLSVLQ (263 aa)) constitute an Olfactomedin-like domain. C246 and C437 form a disulfide bridge. Residue N253 is glycosylated (N-linked (GlcNAc...) asparagine).

As to quaternary structure, homomultimer; disulfide-linked. Interacts with NDUFA13. Interacts with cell surface lectins (locutions ricinus communis agglutinin I, concanavalin-A and wheat germ agglutinin) and cadherin. N-glycosylated. In terms of tissue distribution, expressed during myeloid lineage development. Much higher expression in bone marrow neutrophils than in peripheral blood neutrophils (at protein level). Strongly expressed in the prostate, small intestine and colon and moderately expressed in the bone marrow and stomach. Overexpressed in some pancreatic cancer tissues.

The protein resides in the secreted. The protein localises to the extracellular space. It is found in the mitochondrion. In terms of biological role, may promote proliferation of pancreatic cancer cells by favoring the transition from the S to G2/M phase. In myeloid leukemic cell lines, inhibits cell growth and induces cell differentiation and apoptosis. May play a role in the inhibition of EIF4EBP1 phosphorylation/deactivation. Facilitates cell adhesion, most probably through interaction with cell surface lectins and cadherin. The polypeptide is Olfactomedin-4 (OLFM4) (Homo sapiens (Human)).